We begin with the raw amino-acid sequence, 398 residues long: tRNA-specific 2-thiouridylase MnmA (398 aa).

ATP is bound by residues 33 to 40 and Met59; that span reads GMSGGVDS. The interval 119–121 is interaction with target base in tRNA; it reads NPD. The active-site Nucleophile is Cys124. Residues Cys124 and Cys226 are joined by a disulfide bond. An ATP-binding site is contributed by Gly148. The interaction with tRNA stretch occupies residues 176-178; the sequence is KDQ. The active-site Cysteine persulfide intermediate is Cys226. The segment at 343–344 is interaction with tRNA; that stretch reads RY.

The protein belongs to the MnmA/TRMU family.

Its subcellular location is the cytoplasm. It catalyses the reaction S-sulfanyl-L-cysteinyl-[protein] + uridine(34) in tRNA + AH2 + ATP = 2-thiouridine(34) in tRNA + L-cysteinyl-[protein] + A + AMP + diphosphate + H(+). Functionally, catalyzes the 2-thiolation of uridine at the wobble position (U34) of tRNA, leading to the formation of s(2)U34. This chain is tRNA-specific 2-thiouridylase MnmA, found in Psychrobacter sp. (strain PRwf-1).